Here is an 859-residue protein sequence, read N- to C-terminus: Bifunctional levopimaradiene synthase, chloroplastic (859 aa).

The N-terminal 52 residues, 1–52, are a transit peptide targeting the chloroplast; it reads MALLSSSLSSHIPTGAHHLTLNAYANTQCIPHFFSTLNAGTSAGKRSSLYLR. Mg(2+) is bound by residues Asp392, Asp394, Asp611, Asp615, Asn755, and Glu763. The DXDD motif motif lies at 392–395; sequence DIDD. The DDXXD motif motif lies at 611–615; that stretch reads DDLYD.

The protein belongs to the terpene synthase family. Tpsd subfamily. Mg(2+) serves as cofactor. It depends on Mn(2+) as a cofactor.

The protein resides in the plastid. The protein localises to the chloroplast. The enzyme catalyses (+)-copalyl diphosphate = abieta-8(14),12-diene + diphosphate. It catalyses the reaction (+)-copalyl diphosphate = abieta-7,13-diene + diphosphate. It functions in the pathway secondary metabolite biosynthesis; terpenoid biosynthesis. It participates in terpene metabolism; oleoresin biosynthesis. Terpene synthase (di-TPS) involved in the biosynthesis of diterpene natural products included in conifer oleoresin secretions and volatile emissions; these compounds contribute to biotic and abiotic stress defense against herbivores and pathogens. Catalyzes the conversion of (+)-copalyl diphosphate ((+)-CPP) to isopimaradiene. The polypeptide is Bifunctional levopimaradiene synthase, chloroplastic (Picea sitchensis (Sitka spruce)).